Here is a 279-residue protein sequence, read N- to C-terminus: Large ribosomal subunit protein uL2 (279 aa).

2 disordered regions span residues 34–58 (LRPLHKTGGRNNTGRITTRHKGGGH) and 225–279 (VMNP…KNKR). The segment covering 251 to 268 (GKPEGRTRRPNKESDKLI) has biased composition (basic and acidic residues). Residues 269–279 (VRRRRTGKNKR) are compositionally biased toward basic residues.

This sequence belongs to the universal ribosomal protein uL2 family. As to quaternary structure, part of the 50S ribosomal subunit. Forms a bridge to the 30S subunit in the 70S ribosome.

In terms of biological role, one of the primary rRNA binding proteins. Required for association of the 30S and 50S subunits to form the 70S ribosome, for tRNA binding and peptide bond formation. It has been suggested to have peptidyltransferase activity; this is somewhat controversial. Makes several contacts with the 16S rRNA in the 70S ribosome. This chain is Large ribosomal subunit protein uL2, found in Micrococcus luteus (strain ATCC 4698 / DSM 20030 / JCM 1464 / CCM 169 / CCUG 5858 / IAM 1056 / NBRC 3333 / NCIMB 9278 / NCTC 2665 / VKM Ac-2230) (Micrococcus lysodeikticus).